The following is a 351-amino-acid chain: Hydroxymethylglutaryl-CoA synthase (351 aa).

Asp-30 lines the (3S)-3-hydroxy-3-methylglutaryl-CoA pocket. Glu-82 acts as the Proton donor/acceptor in catalysis. (3S)-3-hydroxy-3-methylglutaryl-CoA is bound by residues Cys-114, Ser-155, Thr-203, and His-236. The active-site Acyl-thioester intermediate is Cys-114. The active-site Proton donor/acceptor is the His-236. Arg-241 is a binding site for CoA. Positions 245, 268, and 298 each coordinate (3S)-3-hydroxy-3-methylglutaryl-CoA.

It belongs to the thiolase-like superfamily. Archaeal HMG-CoA synthase family. Interacts with acetoacetyl-CoA thiolase that catalyzes the precedent step in the pathway and with a DUF35 protein. The acetoacetyl-CoA thiolase/HMG-CoA synthase complex channels the intermediate via a fused CoA-binding site, which allows for efficient coupling of the endergonic thiolase reaction with the exergonic HMGCS reaction.

It catalyses the reaction acetoacetyl-CoA + acetyl-CoA + H2O = (3S)-3-hydroxy-3-methylglutaryl-CoA + CoA + H(+). The protein operates within metabolic intermediate biosynthesis; (R)-mevalonate biosynthesis; (R)-mevalonate from acetyl-CoA: step 2/3. Functionally, catalyzes the condensation of acetyl-CoA with acetoacetyl-CoA to form 3-hydroxy-3-methylglutaryl-CoA (HMG-CoA). Functions in the mevalonate (MVA) pathway leading to isopentenyl diphosphate (IPP), a key precursor for the biosynthesis of isoprenoid compounds that are building blocks of archaeal membrane lipids. The polypeptide is Hydroxymethylglutaryl-CoA synthase (Pyrobaculum neutrophilum (strain DSM 2338 / JCM 9278 / NBRC 100436 / V24Sta) (Thermoproteus neutrophilus)).